Consider the following 134-residue polypeptide: Waprin-Phi1 (134 aa).

Positions 1 to 23 (MTLRRGSCPLLLFSLVGLLTTCA) are cleaved as a signal peptide. WAP domains lie at 36–82 (VAEK…SCQI) and 83–133 (PDEK…TTAR). Cystine bridges form between cysteine 43-cysteine 72, cysteine 55-cysteine 76, cysteine 59-cysteine 71, cysteine 65-cysteine 80, cysteine 90-cysteine 120, cysteine 103-cysteine 124, cysteine 107-cysteine 119, and cysteine 113-cysteine 129.

This sequence belongs to the venom waprin family. In terms of tissue distribution, expressed by the venom gland.

The protein resides in the secreted. Functionally, damages membranes of susceptible bacteria. Has no hemolytic activity. Not toxic to mice. Does not inhibit the proteinases elastase and cathepsin G. The sequence is that of Waprin-Phi1 from Philodryas olfersii (Green snake).